The following is a 637-amino-acid chain: Early transcription factor 70 kDa subunit (637 aa).

The Helicase ATP-binding domain maps to 32-185 (RTIIDENRSV…GHIIDLMSEE (154 aa)). 45–52 (HIMGSGKT) is a binding site for ATP. The short motif at 135–138 (DEAH) is the DEXH box element. In terms of domain architecture, Helicase C-terminal spans 327–507 (KFKYFINRIQ…VLPFDIKKLL (181 aa)).

Belongs to the helicase family. VETF subfamily. As to quaternary structure, heterodimer of a 70 kDa and a 82 kDa subunit. Part of the early transcription complex composed of ETF, RAP94/OPG109, and the DNA-directed RNA polymerase.

Its subcellular location is the virion. Functionally, acts with RNA polymerase to initiate transcription from early gene promoters. Is recruited by the RPO-associated protein of 94 kDa RAP94/OPG109 to form the early transcription complex, which also contains the core RNA polymerase. ETF heterodimer binds to early gene promoters. In Homo sapiens (Human), this protein is Early transcription factor 70 kDa subunit (OPG118).